Consider the following 206-residue polypeptide: Small ribosomal subunit protein uS4 (206 aa).

The region spanning 96 to 156 (GRLDNVVYRM…EKAKKQSRVK (61 aa)) is the S4 RNA-binding domain.

This sequence belongs to the universal ribosomal protein uS4 family. As to quaternary structure, part of the 30S ribosomal subunit. Contacts protein S5. The interaction surface between S4 and S5 is involved in control of translational fidelity.

Functionally, one of the primary rRNA binding proteins, it binds directly to 16S rRNA where it nucleates assembly of the body of the 30S subunit. In terms of biological role, with S5 and S12 plays an important role in translational accuracy. This Pectobacterium atrosepticum (strain SCRI 1043 / ATCC BAA-672) (Erwinia carotovora subsp. atroseptica) protein is Small ribosomal subunit protein uS4.